Consider the following 154-residue polypeptide: 3-hydroxyacyl-[acyl-carrier-protein] dehydratase FabZ (154 aa).

Residue His-58 is part of the active site.

The protein belongs to the thioester dehydratase family. FabZ subfamily.

The protein localises to the cytoplasm. It catalyses the reaction a (3R)-hydroxyacyl-[ACP] = a (2E)-enoyl-[ACP] + H2O. Involved in unsaturated fatty acids biosynthesis. Catalyzes the dehydration of short chain beta-hydroxyacyl-ACPs and long chain saturated and unsaturated beta-hydroxyacyl-ACPs. This is 3-hydroxyacyl-[acyl-carrier-protein] dehydratase FabZ from Protochlamydia amoebophila (strain UWE25).